A 513-amino-acid chain; its full sequence is ATP synthase subunit alpha (513 aa).

169–176 (GDRQTGKT) contacts ATP.

The protein belongs to the ATPase alpha/beta chains family. In terms of assembly, F-type ATPases have 2 components, CF(1) - the catalytic core - and CF(0) - the membrane proton channel. CF(1) has five subunits: alpha(3), beta(3), gamma(1), delta(1), epsilon(1). CF(0) has three main subunits: a(1), b(2) and c(9-12). The alpha and beta chains form an alternating ring which encloses part of the gamma chain. CF(1) is attached to CF(0) by a central stalk formed by the gamma and epsilon chains, while a peripheral stalk is formed by the delta and b chains.

Its subcellular location is the cell inner membrane. The catalysed reaction is ATP + H2O + 4 H(+)(in) = ADP + phosphate + 5 H(+)(out). In terms of biological role, produces ATP from ADP in the presence of a proton gradient across the membrane. The alpha chain is a regulatory subunit. This is ATP synthase subunit alpha from Actinobacillus succinogenes (strain ATCC 55618 / DSM 22257 / CCUG 43843 / 130Z).